The chain runs to 230 residues: Ureidoacrylate amidohydrolase RutB (230 aa).

Residue Asp24 is the Proton acceptor of the active site. Lys133 is an active-site residue. Cys166 (nucleophile) is an active-site residue.

This sequence belongs to the isochorismatase family. RutB subfamily.

The enzyme catalyses (Z)-3-ureidoacrylate + H2O + H(+) = (Z)-3-aminoacrylate + NH4(+) + CO2. The catalysed reaction is (Z)-3-ureidoacrylate + H2O = (Z)-3-aminoacrylate + carbamate + H(+). It carries out the reaction (Z)-2-methylureidoacrylate + H2O + H(+) = (Z)-2-methylaminoacrylate + NH4(+) + CO2. In terms of biological role, hydrolyzes ureidoacrylate to form aminoacrylate and carbamate. The carbamate hydrolyzes spontaneously, thereby releasing one of the nitrogen atoms of the pyrimidine ring as ammonia and one of its carbon atoms as CO2. The sequence is that of Ureidoacrylate amidohydrolase RutB from Escherichia coli O127:H6 (strain E2348/69 / EPEC).